A 321-amino-acid polypeptide reads, in one-letter code: Solute carrier family 25 member 33 (321 aa).

3 Solcar repeats span residues 9–118 (ENTL…AKEQ), 126–213 (NSNI…LKKY), and 231–315 (TNFF…IVYL). The next 6 helical transmembrane spans lie at 12 to 32 (LLHL…TCPL), 49 to 65 (VYYP…AGVV), 121 to 141 (GVFV…AAFV), 190 to 210 (LTAS…YESL), 233 to 253 (FFGL…VAYP), and 298 to 318 (QIPN…LLED).

The protein belongs to the mitochondrial carrier (TC 2.A.29) family.

It is found in the mitochondrion inner membrane. It carries out the reaction UTP(in) + UDP(out) = UTP(out) + UDP(in). The enzyme catalyses dUTP(out) + UTP(in) = dUTP(in) + UTP(out). It catalyses the reaction 5-methyl-UTP(out) + UTP(in) = 5-methyl-UTP(in) + UTP(out). The catalysed reaction is 5-methyl-UDP(out) + UTP(in) = 5-methyl-UDP(in) + UTP(out). It carries out the reaction UTP(in) + CTP(out) = UTP(out) + CTP(in). The enzyme catalyses CDP(out) + UTP(in) = CDP(in) + UTP(out). It catalyses the reaction dCTP(out) + UTP(in) = dCTP(in) + UTP(out). The catalysed reaction is dCDP(out) + UTP(in) = dCDP(in) + UTP(out). It carries out the reaction UTP(in) + GTP(out) = UTP(out) + GTP(in). The enzyme catalyses UTP(in) + GDP(out) = UTP(out) + GDP(in). It catalyses the reaction dGTP(out) + UTP(in) = dGTP(in) + UTP(out). The catalysed reaction is dGDP(out) + UTP(in) = dGDP(in) + UTP(out). It carries out the reaction ITP(out) + UTP(in) = ITP(in) + UTP(out). Its function is as follows. Mitochondrial transporter that imports/exports pyrimidine nucleotides into and from mitochondria. Selectively transports uridine, thymidine, guanosine, cytosine and inosine (deoxy)nucleoside di- and triphosphates by an antiport mechanism. May import (deoxy)nucleoside triphosphates in exchange for intramitochondrial (deoxy)nucleoside diphosphates, thus providing precursors necessary for de novo synthesis of mitochondrial DNA and RNA while exporting products of their catabolism. Participates in mitochondrial genome maintenance, regulation of mitochondrial membrane potential and mitochondrial respiration. Upon INS or IGF1 stimulation regulates cell growth and proliferation by controlling mitochondrial DNA replication and transcription, the ratio of mitochondria-to nuclear-encoded components of the electron transport chain resulting in control of mitochondrial ROS production. Participates in dendritic cell endocytosis and may associate with mitochondrial oxidative phosphorylation. This chain is Solute carrier family 25 member 33 (SLC25A33), found in Bos taurus (Bovine).